Here is a 104-residue protein sequence, read N- to C-terminus: Protein RnfH (104 aa).

Belongs to the UPF0125 (RnfH) family.

The protein is Protein RnfH of Pseudomonas fluorescens (strain Pf0-1).